Reading from the N-terminus, the 114-residue chain is Pole-localizer protein TmaR (114 aa).

The stretch at 70 to 111 (RDDYESRVDDYTIRNAELSKQRREASTKMKEQKKAHAELLKN) forms a coiled coil. The disordered stretch occupies residues 89–114 (KQRREASTKMKEQKKAHAELLKNAEK).

This sequence belongs to the pole-localizer TmaR family.

The protein localises to the cytoplasm. In terms of biological role, pole-localizer protein involved in the regulation of several cellular processes. This Haemophilus influenzae (strain PittEE) protein is Pole-localizer protein TmaR.